Here is a 413-residue protein sequence, read N- to C-terminus: Multidrug resistance protein MdtA (413 aa).

A signal peptide spans 1–32 (MNAKRIRGLLIFAAVIAIAVLIWRHFTQTSPA). The segment covering 32 to 46 (AAPGTSEQHAARTSH) has biased composition (polar residues). The interval 32 to 59 (AAPGTSEQHAARTSHSGNNSSGNGGGRR) is disordered.

This sequence belongs to the membrane fusion protein (MFP) (TC 8.A.1) family. As to quaternary structure, part of a tripartite efflux system composed of MdtA, MdtB and MdtC.

The protein localises to the cell inner membrane. The chain is Multidrug resistance protein MdtA from Pectobacterium carotovorum subsp. carotovorum (strain PC1).